Reading from the N-terminus, the 325-residue chain is Cln5-like protein 2 (325 aa).

The N-terminal stretch at 1–19 (MNKLIFIIICLGIVDKTIS) is a signal peptide. N-linked (GlcNAc...) asparagine glycans are attached at residues Asn88, Asn117, Asn133, Asn163, Asn182, Asn189, Asn238, and Asn262.

This sequence belongs to the CLN5 family.

The sequence is that of Cln5-like protein 2 (cln5lb) from Dictyostelium discoideum (Social amoeba).